Here is a 403-residue protein sequence, read N- to C-terminus: Aspartic endopeptidase PEP1 (403 aa).

An N-terminal signal peptide occupies residues 1-20 (MVQISQIGAVLAVCSTLTVA). A propeptide spans 21–67 (APTKGKARFNVPQVAVPMKAVHHPAVAYARALHKFGMKVPKAVSDAA) (activation peptide). Residues 82 to 400 (YVTQVTVGQG…DTEGPRIGFA (319 aa)) form the Peptidase A1 domain. The active site involves D98. N-linked (GlcNAc...) asparagine glycans are attached at residues N159 and N270. Residue D293 is part of the active site. A disulfide bridge connects residues C329 and C361.

Belongs to the peptidase A1 family.

Its subcellular location is the secreted. It carries out the reaction Hydrolysis of proteins with broad specificity. Generally favors hydrophobic residues in P1 and P1', but also accepts Lys in P1, which leads to activation of trypsinogen. Does not clot milk.. Its function is as follows. Secreted aspartic endopeptidase that allows assimilation of proteinaceous substrates. Can catalyze hydrolysis of the major structural proteins of basement membrane, elastin, collagen, and laminin. Thought to play a significant role in virulence. In terms of biological role, can catalyze hydrolysis of the major structural proteins of basement membrane, elastin, collagen, and laminin. Thought to play a significant role in virulence. The protein is Aspartic endopeptidase PEP1 (PEP1) of Trichophyton verrucosum (strain HKI 0517).